A 129-amino-acid chain; its full sequence is Glycine cleavage system H protein (129 aa).

The 83-residue stretch at 24–106 (TYTVGITEHA…YAGGWIFKIK (83 aa)) folds into the Lipoyl-binding domain. At Lys-65 the chain carries N6-lipoyllysine.

Belongs to the GcvH family. In terms of assembly, the glycine cleavage system is composed of four proteins: P, T, L and H. Requires (R)-lipoate as cofactor.

In terms of biological role, the glycine cleavage system catalyzes the degradation of glycine. The H protein shuttles the methylamine group of glycine from the P protein to the T protein. This chain is Glycine cleavage system H protein, found in Shigella dysenteriae serotype 1 (strain Sd197).